Consider the following 637-residue polypeptide: MIKISLKNGKEIEVEKGLKVIDIAAKLSISLSKKALGAVVDGKVVELNYKINKDCKVEILTFEDEEGKKILRHTASHILAQAIKRLYPEVKLAIGPAIDSGFYYDVDAEFSFTPELLEKIEGKMNEIIKENIKLERFELPREEAIKFMEEKNEPYKVELIKDLPEDSIISFYKQGDFVDLCAGPHVPSTGRAKAVKLLSIAGAYWRGNENNKMLQRIYGTVFEKKSDLQDYLKLMEEAKKRDHRKLGKELDLFSIHEEGPGFPFFHPKGMVIRNTLQNFWREMHYKADYSEIMTPIILNEELWHRSGHWDHYKENMYFTKIDDGNYAIKPMNCPGSILVYKNDIRSYRDLPKRYAEMGVVHRHEKSGALHGLMRVRCFTQDDAHIFVTKDDIADEIIKVIDLIDNFYKIFGFEYFVELSTRPEDSMGSDEDWEAATEGLKNALKMVGLDYKINEGDGAFYGPKIDFHLKDCIGRTWQCGTVQLDFQMPEKFDLNYIGADGEKHRPVMIHRVVFGSIERFIGILIEHYAGAFPAWIAPVQVQVMNITDAQADYVAEVAKTLKENNIRVECDIRNEKIGYKIREAQMHKVPYMIILGDKEMKDKNISVRSRKEGDIGAMSLEDFILKLKEEIDKKISHV.

In terms of domain architecture, TGS spans 1–61 (MIKISLKNGK…NKDCKVEILT (61 aa)). Residues 242–532 (DHRKLGKELD…LIEHYAGAFP (291 aa)) are catalytic. Residues cysteine 333, histidine 384, and histidine 509 each contribute to the Zn(2+) site.

It belongs to the class-II aminoacyl-tRNA synthetase family. As to quaternary structure, homodimer. It depends on Zn(2+) as a cofactor.

Its subcellular location is the cytoplasm. It catalyses the reaction tRNA(Thr) + L-threonine + ATP = L-threonyl-tRNA(Thr) + AMP + diphosphate + H(+). In terms of biological role, catalyzes the attachment of threonine to tRNA(Thr) in a two-step reaction: L-threonine is first activated by ATP to form Thr-AMP and then transferred to the acceptor end of tRNA(Thr). Also edits incorrectly charged L-seryl-tRNA(Thr). In Clostridium kluyveri (strain NBRC 12016), this protein is Threonine--tRNA ligase.